The sequence spans 442 residues: D-serine dehydratase (442 aa).

K118 is subject to N6-(pyridoxal phosphate)lysine.

Belongs to the serine/threonine dehydratase family. DsdA subfamily. As to quaternary structure, monomer. Pyridoxal 5'-phosphate serves as cofactor.

It carries out the reaction D-serine = pyruvate + NH4(+). This Escherichia coli O81 (strain ED1a) protein is D-serine dehydratase.